A 158-amino-acid chain; its full sequence is SsrA-binding protein (158 aa).

Over residues 133-148 (KAQDKRETSAKRDWNR) the composition is skewed to basic and acidic residues. A disordered region spans residues 133-158 (KAQDKRETSAKRDWNRQKARLLKQNG). The span at 149-158 (QKARLLKQNG) shows a compositional bias: basic residues.

This sequence belongs to the SmpB family.

It localises to the cytoplasm. Its function is as follows. Required for rescue of stalled ribosomes mediated by trans-translation. Binds to transfer-messenger RNA (tmRNA), required for stable association of tmRNA with ribosomes. tmRNA and SmpB together mimic tRNA shape, replacing the anticodon stem-loop with SmpB. tmRNA is encoded by the ssrA gene; the 2 termini fold to resemble tRNA(Ala) and it encodes a 'tag peptide', a short internal open reading frame. During trans-translation Ala-aminoacylated tmRNA acts like a tRNA, entering the A-site of stalled ribosomes, displacing the stalled mRNA. The ribosome then switches to translate the ORF on the tmRNA; the nascent peptide is terminated with the 'tag peptide' encoded by the tmRNA and targeted for degradation. The ribosome is freed to recommence translation, which seems to be the essential function of trans-translation. The polypeptide is SsrA-binding protein (Jannaschia sp. (strain CCS1)).